We begin with the raw amino-acid sequence, 86 residues long: AFAGVLADADIKAALAGCAAADSFNYKTFFKACGLSPEEVKKFFAIIDQDHSGFIEEEELKLFLQTFSAGARALSDAETKVALVKA.

Ala-1 carries the N-acetylalanine modification. The EF-hand domain occupies 35-70 (LSPEEVKKFFAIIDQDHSGFIEEEELKLFLQTFSAG). Ca(2+)-binding residues include Asp-48, Asp-50, Ser-52, Phe-54, Glu-56, and Glu-59.

The protein belongs to the parvalbumin family.

In muscle, parvalbumin is thought to be involved in relaxation after contraction. It binds two calcium ions. The protein is Parvalbumin beta 3 of Merluccius hubbsi (Argentine hake).